A 156-amino-acid chain; its full sequence is Small ribosomal subunit protein uS7 (156 aa).

It belongs to the universal ribosomal protein uS7 family. As to quaternary structure, part of the 30S ribosomal subunit. Contacts proteins S9 and S11.

Its function is as follows. One of the primary rRNA binding proteins, it binds directly to 16S rRNA where it nucleates assembly of the head domain of the 30S subunit. Is located at the subunit interface close to the decoding center, probably blocks exit of the E-site tRNA. The chain is Small ribosomal subunit protein uS7 from Aromatoleum aromaticum (strain DSM 19018 / LMG 30748 / EbN1) (Azoarcus sp. (strain EbN1)).